A 204-amino-acid polypeptide reads, in one-letter code: Thymidylate kinase (204 aa).

Residue 11 to 18 participates in ATP binding; it reads GLDKSGKT.

It belongs to the thymidylate kinase family.

The catalysed reaction is dTMP + ATP = dTDP + ADP. Its pathway is pyrimidine metabolism; dTTP biosynthesis. This chain is Thymidylate kinase (TMK), found in Bos taurus (Bovine).